A 101-amino-acid polypeptide reads, in one-letter code: NADH-quinone oxidoreductase subunit K (101 aa).

The next 3 membrane-spanning stretches (helical) occupy residues 4 to 24 (LAHY…GIFL), 30 to 50 (IIIL…FVAF), and 61 to 81 (IFVF…LAIL).

The protein belongs to the complex I subunit 4L family. In terms of assembly, NDH-1 is composed of 14 different subunits. Subunits NuoA, H, J, K, L, M, N constitute the membrane sector of the complex.

Its subcellular location is the cell inner membrane. The enzyme catalyses a quinone + NADH + 5 H(+)(in) = a quinol + NAD(+) + 4 H(+)(out). Functionally, NDH-1 shuttles electrons from NADH, via FMN and iron-sulfur (Fe-S) centers, to quinones in the respiratory chain. The immediate electron acceptor for the enzyme in this species is believed to be ubiquinone. Couples the redox reaction to proton translocation (for every two electrons transferred, four hydrogen ions are translocated across the cytoplasmic membrane), and thus conserves the redox energy in a proton gradient. The polypeptide is NADH-quinone oxidoreductase subunit K (Burkholderia cenocepacia (strain HI2424)).